Reading from the N-terminus, the 326-residue chain is Mitochondrial glycine transporter (326 aa).

Solcar repeat units lie at residues 45 to 134 (HPVI…SKQY), 141 to 225 (PTAL…TRTA), and 237 to 321 (LIPL…MMAR). 6 helical membrane-spanning segments follow: residues 51–76 (FLCGSISGTCSTLLFQPLDLLKTRLQ), 109–135 (GMSPSIVRCVPGVGIYFGTLYSSKQYF), 147–172 (VILGMGSRSVAGVCMSPITVIKTRYE), 200–223 (GLTATLLRDAPFSGLYLMFYSQTR), 241–267 (INFSCGIFAGVLASLVTQPADVIKTHM), and 296–314 (GSVPRALRRTLMAAMAWTV).

The protein belongs to the mitochondrial carrier (TC 2.A.29) family. SLC25A38 subfamily.

The protein resides in the mitochondrion inner membrane. It catalyses the reaction glycine(in) = glycine(out). Its function is as follows. Mitochondrial glycine transporter that imports glycine into the mitochondrial matrix. Plays an important role in providing glycine for the first enzymatic step in heme biosynthesis, the condensation of glycine with succinyl-CoA to produce 5-aminolevulinate (ALA) in the mitochondrial matrix. Required during erythropoiesis. In terms of biological role, plays a role as pro-apoptotic protein that induces caspase-dependent apoptosis. The sequence is that of Mitochondrial glycine transporter from Mus musculus (Mouse).